Consider the following 256-residue polypeptide: Putative adhesin P1-like protein MPN_132 (256 aa).

The span at 56–72 (AVSESQAATSSTTTTAT) shows a compositional bias: low complexity. 2 disordered regions span residues 56 to 115 (AVSE…PYLH) and 149 to 235 (FGTD…EVVG). The span at 96–112 (KASTQGSGQTNSQNTSP) shows a compositional bias: polar residues. 2 stretches are compositionally biased toward low complexity: residues 155–179 (TQPQ…LGSV) and 211–222 (STSDGNTSSTNN).

The protein belongs to the adhesin P1 family.

This is Putative adhesin P1-like protein MPN_132 from Mycoplasma pneumoniae (strain ATCC 29342 / M129 / Subtype 1) (Mycoplasmoides pneumoniae).